The following is a 412-amino-acid chain: Tyrosine--tRNA ligase (412 aa).

Tyrosine 41 is an L-tyrosine binding site. A 'HIGH' region motif is present at residues 46-55 (ATADSLHVGH). 2 residues coordinate L-tyrosine: tyrosine 174 and glutamine 178. The 'KMSKS' region signature appears at 234–238 (KMGKS). Residue lysine 237 coordinates ATP. An S4 RNA-binding domain is found at 348–411 (LSLTDLLLEH…KKQHLHLRLE (64 aa)).

This sequence belongs to the class-I aminoacyl-tRNA synthetase family. TyrS type 1 subfamily. In terms of assembly, homodimer.

Its subcellular location is the cytoplasm. The enzyme catalyses tRNA(Tyr) + L-tyrosine + ATP = L-tyrosyl-tRNA(Tyr) + AMP + diphosphate + H(+). Functionally, catalyzes the attachment of tyrosine to tRNA(Tyr) in a two-step reaction: tyrosine is first activated by ATP to form Tyr-AMP and then transferred to the acceptor end of tRNA(Tyr). The sequence is that of Tyrosine--tRNA ligase from Pseudomonas aeruginosa (strain LESB58).